The primary structure comprises 482 residues: Aspartyl/glutamyl-tRNA(Asn/Gln) amidotransferase subunit B (482 aa).

This sequence belongs to the GatB/GatE family. GatB subfamily. Heterotrimer of A, B and C subunits.

It catalyses the reaction L-glutamyl-tRNA(Gln) + L-glutamine + ATP + H2O = L-glutaminyl-tRNA(Gln) + L-glutamate + ADP + phosphate + H(+). The enzyme catalyses L-aspartyl-tRNA(Asn) + L-glutamine + ATP + H2O = L-asparaginyl-tRNA(Asn) + L-glutamate + ADP + phosphate + 2 H(+). Functionally, allows the formation of correctly charged Asn-tRNA(Asn) or Gln-tRNA(Gln) through the transamidation of misacylated Asp-tRNA(Asn) or Glu-tRNA(Gln) in organisms which lack either or both of asparaginyl-tRNA or glutaminyl-tRNA synthetases. The reaction takes place in the presence of glutamine and ATP through an activated phospho-Asp-tRNA(Asn) or phospho-Glu-tRNA(Gln). The protein is Aspartyl/glutamyl-tRNA(Asn/Gln) amidotransferase subunit B of Thermotoga petrophila (strain ATCC BAA-488 / DSM 13995 / JCM 10881 / RKU-1).